The following is a 424-amino-acid chain: Histidine--tRNA ligase (424 aa).

It belongs to the class-II aminoacyl-tRNA synthetase family. Homodimer.

The protein localises to the cytoplasm. The catalysed reaction is tRNA(His) + L-histidine + ATP = L-histidyl-tRNA(His) + AMP + diphosphate + H(+). The sequence is that of Histidine--tRNA ligase from Shigella boydii serotype 18 (strain CDC 3083-94 / BS512).